The sequence spans 477 residues: Splicing factor 3A subunit 2 (477 aa).

Met-1 bears the N-acetylmethionine mark. Residues 1–27 (MDFQHRPGGKTGSGGVASSSESNRDRR) form a disordered region. Lys-10 is modified (N6-acetyllysine). The segment at 54-84 (YECKLCLTLHNNEGSYLAHTQGKKHQTNLAR) adopts a Matrin-type zinc-finger fold. Phosphoserine is present on Ser-153. Composition is skewed to pro residues over residues 217–295 (PPAP…PVVH), 303–323 (PPAPGVHPPAPGVHPPAPVVH), and 331–362 (PPAPGVHPPAPGVHPPAPGVHPPAPGVHPPPS). A disordered region spans residues 217–477 (PPAPPSLPAG…GNIPPPPPTN (261 aa)). Residues 379–398 (VHPQAPGVHPTPAVHPQAPG) show a composition bias toward low complexity. 2 stretches are compositionally biased toward pro residues: residues 399–441 (VHPP…PPGV) and 448–477 (VHPPTPMPPMLRPPLPSEGPGNIPPPPPTN).

This sequence belongs to the SF3A2 family. In terms of assembly, component of the 17S U2 SnRNP complex, a ribonucleoprotein complex that contains small nuclear RNA (snRNA) U2 and a number of specific proteins. Part of the SF3A subcomplex of the 17S U2 SnRNP complex which is composed of three subunits; SF3A3/SAP61, SF3A2/SAP62 and SF3A1/SAP114. SF3A associates with the splicing factor SF3B and a 12S RNA unit to form the mature 17S U2 small nuclear ribonucleoprotein complex (17S U2 snRNP). Identified in the spliceosome 'E' complex, a precursor of the spliceosome 'A' complex. Identified in the spliceosome 'A' and 'B' complexes. Identified in the spliceosome 'C' complex. Interacts with HTATSF1.

The protein localises to the nucleus. Component of the 17S U2 SnRNP complex of the spliceosome, a large ribonucleoprotein complex that removes introns from transcribed pre-mRNAs. The 17S U2 SnRNP complex (1) directly participates in early spliceosome assembly and (2) mediates recognition of the intron branch site during pre-mRNA splicing by promoting the selection of the pre-mRNA branch-site adenosine, the nucleophile for the first step of splicing. Within the 17S U2 SnRNP complex, SF3A2 is part of the SF3A subcomplex that contributes to the assembly of the 17S U2 snRNP, and the subsequent assembly of the pre-spliceosome 'E' complex and the pre-catalytic spliceosome 'A' complex. Involved in pre-mRNA splicing as a component of pre-catalytic spliceosome 'B' complexes, including the Bact complex. Interacts directly with the duplex formed by U2 snRNA and the intron. This chain is Splicing factor 3A subunit 2 (SF3A2), found in Bos taurus (Bovine).